The sequence spans 66 residues: Sec-independent protein translocase protein TatA (66 aa).

Residues M1–R21 form a helical membrane-spanning segment. The tract at residues A43–E66 is disordered. Residues P50–E66 are compositionally biased toward basic and acidic residues.

The protein belongs to the TatA/E family. As to quaternary structure, the Tat system comprises two distinct complexes: a TatABC complex, containing multiple copies of TatA, TatB and TatC subunits, and a separate TatA complex, containing only TatA subunits. Substrates initially bind to the TatABC complex, which probably triggers association of the separate TatA complex to form the active translocon.

The protein resides in the cell inner membrane. Part of the twin-arginine translocation (Tat) system that transports large folded proteins containing a characteristic twin-arginine motif in their signal peptide across membranes. TatA could form the protein-conducting channel of the Tat system. The polypeptide is Sec-independent protein translocase protein TatA (Pelagibacter ubique (strain HTCC1062)).